Reading from the N-terminus, the 132-residue chain is Cell division protein FtsL (132 aa).

Topologically, residues 1-50 (MAELKKMRHNHYDVPVMDEPVIASQIKKTNQKKESFQLPQKKLNKISVFE) are cytoplasmic. A helical membrane pass occupies residues 51–71 (KILCILLLCSIVGIVVITIQI). At 72-132 (RTTISETMNN…EIDGNLRKVK (61 aa)) the chain is on the extracellular side.

Belongs to the FtsL family.

Its subcellular location is the cell membrane. In terms of biological role, essential cell division protein. The polypeptide is Cell division protein FtsL (Melissococcus plutonius (strain ATCC 35311 / DSM 29964 / CIP 104052 / LMG 20360 / NCIMB 702443)).